A 364-amino-acid chain; its full sequence is MSEIIHRSKTRPVRVGNITIGGNNEVVIQSMTTTKTHDVDATVAQIHRLEEAGCQIVRVACPDERAADAIAEIKKRINIPLVVDIHFDYRLALKAIENGADKIRINPGNIGKREKVEAVVKAAKERGVPIRIGVNAGSLEKRILDKYGYPTADGMVESALHHIRILEDLDFQDIIVSLKASDVRLAIEAYEKAARAFDYPLHLGITESGTLFAGTVKSAAGLGAILSKGIGNTVRVSLSADPVEEVKVARELLKAFGLAANAATLISCPTCGRIEIDLISIANEIEEYIAQIKAPIKVAVLGCAVNGPGEAREADIGIAGARGEGLLFRHGKIVRKVPEETMVEELKKEIDKLAEEYASKGKQK.

[4Fe-4S] cluster is bound by residues C268, C271, C303, and E310.

It belongs to the IspG family. The cofactor is [4Fe-4S] cluster.

It carries out the reaction (2E)-4-hydroxy-3-methylbut-2-enyl diphosphate + oxidized [flavodoxin] + H2O + 2 H(+) = 2-C-methyl-D-erythritol 2,4-cyclic diphosphate + reduced [flavodoxin]. It participates in isoprenoid biosynthesis; isopentenyl diphosphate biosynthesis via DXP pathway; isopentenyl diphosphate from 1-deoxy-D-xylulose 5-phosphate: step 5/6. Functionally, converts 2C-methyl-D-erythritol 2,4-cyclodiphosphate (ME-2,4cPP) into 1-hydroxy-2-methyl-2-(E)-butenyl 4-diphosphate. The sequence is that of 4-hydroxy-3-methylbut-2-en-1-yl diphosphate synthase (flavodoxin) from Anoxybacillus flavithermus (strain DSM 21510 / WK1).